Consider the following 86-residue polypeptide: UPF0297 protein BBR47_19030 (86 aa).

It belongs to the UPF0297 family.

This is UPF0297 protein BBR47_19030 from Brevibacillus brevis (strain 47 / JCM 6285 / NBRC 100599).